The following is a 338-amino-acid chain: Fructose-1,6-bisphosphatase class 1 1 (338 aa).

Mg(2+) is bound by residues glutamate 91, aspartate 113, leucine 115, and aspartate 116. Residues 116-119 (DGSS), asparagine 208, and lysine 274 contribute to the substrate site. Glutamate 280 lines the Mg(2+) pocket.

Belongs to the FBPase class 1 family. Homotetramer. It depends on Mg(2+) as a cofactor.

The protein resides in the cytoplasm. The enzyme catalyses beta-D-fructose 1,6-bisphosphate + H2O = beta-D-fructose 6-phosphate + phosphate. It functions in the pathway carbohydrate biosynthesis; gluconeogenesis. The polypeptide is Fructose-1,6-bisphosphatase class 1 1 (Cupriavidus metallidurans (strain ATCC 43123 / DSM 2839 / NBRC 102507 / CH34) (Ralstonia metallidurans)).